The primary structure comprises 178 residues: Matrix-remodeling-associated protein 7 (178 aa).

The chain crosses the membrane as a helical span at residues 7–27 (LLAALPALVTALALLLAWLLL). The tract at residues 33-121 (RVPAPESTAS…AFSFKYSPGQ (89 aa)) is disordered. The segment covering 48-65 (APAPPEPPESCAPEPAPE) has biased composition (pro residues). The segment covering 76-85 (PEESEAEEPA) has biased composition (acidic residues). Phosphoserine occurs at positions 79 and 165.

It is found in the membrane. In Mus musculus (Mouse), this protein is Matrix-remodeling-associated protein 7 (Mxra7).